The sequence spans 249 residues: 2,3-bisphosphoglycerate-dependent phosphoglycerate mutase (249 aa).

Substrate contacts are provided by residues 8–15 (RHGESVWN), 21–22 (TG), Arg60, 87–90 (ERHY), Lys98, 114–115 (RR), and 183–184 (GN). His9 serves as the catalytic Tele-phosphohistidine intermediate. The active-site Proton donor/acceptor is Glu87.

It belongs to the phosphoglycerate mutase family. BPG-dependent PGAM subfamily.

The catalysed reaction is (2R)-2-phosphoglycerate = (2R)-3-phosphoglycerate. Its pathway is carbohydrate degradation; glycolysis; pyruvate from D-glyceraldehyde 3-phosphate: step 3/5. Functionally, catalyzes the interconversion of 2-phosphoglycerate and 3-phosphoglycerate. The chain is 2,3-bisphosphoglycerate-dependent phosphoglycerate mutase from Endomicrobium trichonymphae.